The primary structure comprises 417 residues: Gamma-glutamyl phosphate reductase (417 aa).

The protein belongs to the gamma-glutamyl phosphate reductase family.

The protein localises to the cytoplasm. It carries out the reaction L-glutamate 5-semialdehyde + phosphate + NADP(+) = L-glutamyl 5-phosphate + NADPH + H(+). It participates in amino-acid biosynthesis; L-proline biosynthesis; L-glutamate 5-semialdehyde from L-glutamate: step 2/2. In terms of biological role, catalyzes the NADPH-dependent reduction of L-glutamate 5-phosphate into L-glutamate 5-semialdehyde and phosphate. The product spontaneously undergoes cyclization to form 1-pyrroline-5-carboxylate. The sequence is that of Gamma-glutamyl phosphate reductase from Escherichia coli O127:H6 (strain E2348/69 / EPEC).